Here is a 67-residue protein sequence, read N- to C-terminus: Bowman-Birk type major trypsin inhibitor (67 aa).

Cystine bridges form between Cys-8–Cys-63, Cys-9–Cys-24, Cys-14–Cys-22, Cys-31–Cys-38, and Cys-35–Cys-51.

It belongs to the Bowman-Birk serine protease inhibitor family.

This Setaria italica (Foxtail millet) protein is Bowman-Birk type major trypsin inhibitor.